The primary structure comprises 406 residues: Acetyltransferase sirH (406 aa).

Transmembrane regions (helical) follow at residues 9–29, 32–52, 63–83, 295–315, 323–343, and 358–378; these read IFIE…FALG, AHTF…CQSL, LLSN…WILL, VQLF…ALLC, SALF…HVIA, and FIGF…WVGS.

The protein belongs to the wax synthase family.

It localises to the membrane. It functions in the pathway mycotoxin biosynthesis. Acetyltransferase; part of the gene cluster that mediates the biosynthesis of sirodesmin PL, an epipolythiodioxopiperazine (ETP) characterized by a disulfide bridged cyclic dipeptide and that acts as a phytotoxin which is involved in the blackleg didease of canola. SirD catalyzes the O-prenylation of L-tyrosine (L-Tyr) in the presence of dimethylallyl diphosphate (DMAPP) to yield 4-O-dimethylallyl-L-Tyr, and therefore represents probably the first pathway-specific enzyme in the biosynthesis of sirodesmin PL. 4-O-dimethylallyl-L-Tyr, then undergoes condensation with L-Ser in a reaction catalyzed by the non-ribosomal peptide synthase sirP to form the diketopiperazine (DKP) backbone. Further bishydroxylation of the DKP performed by the cytochrome P450 monooxygenase sirC leads to the production of the intermediate phomamide. This step is essential to form the reactive thiol group required for toxicity of sirodesmin PL. The next steps of sirodesmin biosynthesis are not well understood yet, but some predictions could be made from intermediate compounds identification. Phomamide is converted into phomalizarine via oxidation, probably by sirT. Further oxidation, methylation (by sirM or sirN) and reduction steps convert phomalizarine to deacetyl sirodesmin. Finally, acetyltransferase sirH probably acetylates deacetyl sirodesmin to produce sirodesmin PL. The chain is Acetyltransferase sirH from Leptosphaeria maculans (Blackleg fungus).